The following is a 2014-amino-acid chain: Fatty acid synthase beta subunit pigK (2014 aa).

An acetyltransferase (AT) domain region spans residues 144 to 515 (LAAVFGGQST…KDGQGVRVII (372 aa)). Catalysis depends on Ser-263, which acts as the For acetyltransferase activity. The enoyl reductase (ER) domain stretch occupies residues 570 to 815 (SRLLDTPPLM…LITEASGVSD (246 aa)). A dehydratase (DH) domain region spans residues 1126-1606 (RSGSPWIHAL…LPGDRLLVNV (481 aa)). Residues 1514-1627 (PGWPGVSSLE…FNVSAFKQAT (114 aa)) enclose the MaoC-like domain. Positions 1645-2005 (FFFTGQGSQK…VREVFNITQS (361 aa)) are malonyl/palmitoyl transferase (MT/PT) domain. The active-site For malonyltransferase activity is the Ser-1790.

This sequence belongs to the fungal fatty acid synthetase subunit beta family. In terms of assembly, [Alpha(6)beta(6)] hexamers of two multifunctional subunits (alpha and beta).

The catalysed reaction is acetyl-CoA + n malonyl-CoA + 2n NADPH + 4n H(+) = a long-chain-acyl-CoA + n CoA + n CO2 + 2n NADP(+).. It carries out the reaction holo-[ACP] + acetyl-CoA = acetyl-[ACP] + CoA. It catalyses the reaction holo-[ACP] + malonyl-CoA = malonyl-[ACP] + CoA. The enzyme catalyses a (3R)-hydroxyacyl-[ACP] = a (2E)-enoyl-[ACP] + H2O. The catalysed reaction is a 2,3-saturated acyl-[ACP] + NAD(+) = a (2E)-enoyl-[ACP] + NADH + H(+). It carries out the reaction (9Z)-octadecenoyl-[ACP] + H2O = (9Z)-octadecenoate + holo-[ACP] + H(+). It participates in secondary metabolite biosynthesis. In terms of biological role, fatty acid synthase subunit beta; part of the gene cluster that mediates the biosynthesis of azaphilone pigments (MonAzPs), a complex mixture of compounds with a common azaphilone skeleton very widely used as food colorants. PigJ and pigK form the two subunits of a dedicated fungal fatty acid synthase (FAS) that produces the side chain fatty acyl moiety of MonAzPs, a beta-keto fatty acid. The chain length control of the pigJ-pigK FAS is somewhat flexible as MonAzPs features either a beta-ketooctanoic or a beta-ketodecanoic acid moiety. The beta-ketoacyl-ACP probably serves as the substrate for the acetyltransferase pigD that directly transfers the fatty acyl chain to the C-4 alcohol of the pyran ring. The first step of the pathway is performed by the nrPKS pigA that forms the hexaketide precursor from successive condensations of five malonyl-CoA units, with a simple acetyl-CoA starter unit. The role of esterase pigG is not clear, but it may play at most a supplementary role in the formation of the benzaldehyde produced by the pigA nrPKS. This very reactive benzaldehyde is intercepted by the pigC ketoreductase that to provide the first stable enzyme-free MonAzPs intermediate, 6-(4-hydroxy-2-oxopentyl)-3-methyl-2,4-dioxocyclohexane carbaldehyde, also known as M7PKS-1. The FAD-dependent monooxygenase pigN hydroxylates M7PKS-1 at C-4, which triggers the formation of the pyran ring. PigJ, pigK and pigD are involved in the acetylation of the pyran ring. PigJ and pigK form the two subunits of a dedicated fungal FAS that produces the side chain fatty acyl moiety of MonAzPs and pigD transfers the fatty acyl chain to the C-4 alcohol. PigM and pigO are involved in the elimination of the omega-1 alcohol. PigM acts as an O-acetyltransferase that synthesizes the putative O-11 acetyl intermediate whereas pigO eliminates acetic acid to yield an intermediate with a C10(11) double bond. The dehydration of the C-11 alcohol followed by the reduction of the C6(7) double bond by the NAD(P)H-dependent oxidoreductase pigE increases the electrophilicity of the C-5 ketone of the resulting acyl benzopyran. This in turn sets up the C-5 ketone for an intramolecular Knoevenagel aldol condensation with the C-20 enol of the side chain. This condensation affords the characteristic linear tricyclic carbon skeletons of the yellow pigments that serve as the common precursors for the classical yellow pigments monascin and ankaflavin, orange pigments rubopunctatin and monascorubrin, and red pigments ribropunctamine and monascorubramine. The FAD-dependent oxidoreductase pigF is especially invoved in the biosynthesis of orange and red pigments via desaturation of C6(7). The polypeptide is Fatty acid synthase beta subunit pigK (Monascus ruber (Mold)).